A 546-amino-acid chain; its full sequence is CTP synthase (546 aa).

Positions 1–266 are amidoligase domain; the sequence is MARYIFITGG…DTEVLDVFGL (266 aa). Residue S13 coordinates CTP. Residue S13 participates in UTP binding. 14 to 19 is an ATP binding site; it reads SLGKGL. An L-glutamine-binding site is contributed by Y54. Residue D71 coordinates ATP. Positions 71 and 140 each coordinate Mg(2+). CTP is bound by residues 147–149, 187–192, and K223; these read DIE and KTKPTQ. UTP contacts are provided by residues 187–192 and K223; that span reads KTKPTQ. The Glutamine amidotransferase type-1 domain occupies 293–545; it reads NIAIVGKYTG…IGAAKERSRL (253 aa). A357 lines the L-glutamine pocket. The active-site Nucleophile; for glutamine hydrolysis is C384. Residues 385-388, E408, and R473 contribute to the L-glutamine site; that span reads FGMQ. Residues H518 and E520 contribute to the active site.

It belongs to the CTP synthase family. In terms of assembly, homotetramer.

The catalysed reaction is UTP + L-glutamine + ATP + H2O = CTP + L-glutamate + ADP + phosphate + 2 H(+). It catalyses the reaction L-glutamine + H2O = L-glutamate + NH4(+). It carries out the reaction UTP + NH4(+) + ATP = CTP + ADP + phosphate + 2 H(+). The protein operates within pyrimidine metabolism; CTP biosynthesis via de novo pathway; CTP from UDP: step 2/2. Allosterically activated by GTP, when glutamine is the substrate; GTP has no effect on the reaction when ammonia is the substrate. The allosteric effector GTP functions by stabilizing the protein conformation that binds the tetrahedral intermediate(s) formed during glutamine hydrolysis. Inhibited by the product CTP, via allosteric rather than competitive inhibition. In terms of biological role, catalyzes the ATP-dependent amination of UTP to CTP with either L-glutamine or ammonia as the source of nitrogen. Regulates intracellular CTP levels through interactions with the four ribonucleotide triphosphates. The sequence is that of CTP synthase from Phenylobacterium zucineum (strain HLK1).